Consider the following 423-residue polypeptide: CinA-like protein (423 aa).

It belongs to the CinA family.

This chain is CinA-like protein, found in Synechococcus sp. (strain CC9311).